The primary structure comprises 454 residues: OTU domain-containing protein 1 (454 aa).

Disordered stretches follow at residues 36–64 (QSAS…REAA) and 116–257 (LPPP…SRAD). Positions 52-64 (RPPAAATEPREAA) are enriched in low complexity. Pro residues predominate over residues 116–125 (LPPPSAPSPP). 3 stretches are compositionally biased toward basic and acidic residues: residues 151–164 (DAPD…EHRQ), 193–210 (GEER…RASG), and 219–229 (ALRRQDPEAEA). Positions 282 to 411 (KYRFHIIPDG…NGHYDAVFDH (130 aa)) constitute an OTU domain. The cys-loop stretch occupies residues 287 to 293 (IIPDGNC). Asp290 is a catalytic residue. Catalysis depends on Cys293, which acts as the Nucleophile. The tract at residues 342-352 (AAQDGAWAGYP) is his-loop. Positions 399–404 (WLSNGH) are variable-loop. Residue His404 is part of the active site. The region spanning 430–449 (KRDEELAKSMAISLSKMYIE) is the UIM domain.

The enzyme catalyses Thiol-dependent hydrolysis of ester, thioester, amide, peptide and isopeptide bonds formed by the C-terminal Gly of ubiquitin (a 76-residue protein attached to proteins as an intracellular targeting signal).. Its function is as follows. Deubiquitinating enzyme that specifically hydrolyzes 'Lys-63'-linked polyubiquitin to monoubiquitin. Required for the stability and translation of a subset mRNAs with a high abundance of rare codons by mediating deubiquitination of 40S ribosomal protein RPS10/eS10, thereby antagonizing ZNF598-mediated 40S ubiquitination. The abundance of rare codons in mRNAs can limit the translation rate and can lead to ribosome collisions that trigger activation of ribosome quality control (RQC) pathway by ZNF598. OTUD1-mediated deubiquitination prevents activation of the RQC and subsequent dissociation of ribosomes and stimulates formation of polysomes and translation. This Mus musculus (Mouse) protein is OTU domain-containing protein 1 (Otud1).